A 245-amino-acid chain; its full sequence is Heat shock transcription factor (245 aa).

The DNA-binding element occupies 17 to 115 (KSGFVNRLYR…LISLITRDKS (99 aa)). The tract at residues 130–169 (SLQYLASCNYKQQKEINDLKDRIKTLETKYATLYEIISNA) is involved in trimerization.

The protein belongs to the HSF family. Homotrimer. Homotrimerization increases the affinity of HSF1 to DNA.

The protein localises to the nucleus. DNA-binding transcription factor that specifically binds heat shock promoter elements (HSE) and activates transcription. This is Heat shock transcription factor from Enterocytozoon bieneusi (strain H348) (Microsporidian parasite).